A 593-amino-acid polypeptide reads, in one-letter code: Glucose-6-phosphate 1-dehydrogenase, chloroplastic (593 aa).

NADP(+) contacts are provided by residues G116–K123 and R150. An intrachain disulfide couples C168 to C176. K253 contributes to the NADP(+) binding site. D-glucose 6-phosphate contacts are provided by residues K253, H283–K287, E321, and D340. The Proton acceptor role is filled by H345. K438 lines the NADP(+) pocket. The D-glucose 6-phosphate site is built by K441 and R446. NADP(+)-binding residues include R451 and R480. Q482 provides a ligand contact to D-glucose 6-phosphate. Residues Y488 to K490 and R573 contribute to the NADP(+) site.

The protein belongs to the glucose-6-phosphate dehydrogenase family. In terms of assembly, homodimer.

It localises to the plastid. It is found in the chloroplast. The catalysed reaction is D-glucose 6-phosphate + NADP(+) = 6-phospho-D-glucono-1,5-lactone + NADPH + H(+). Its pathway is carbohydrate degradation; pentose phosphate pathway; D-ribulose 5-phosphate from D-glucose 6-phosphate (oxidative stage): step 1/3. Its activity is regulated as follows. Regulated by metabolites. Post-translationally inactivated by cysteine-mediated redox modification via the ferredoxin-thioredoxin system in the light and this avoids futile cycles with photosynthetic CO2 fixation. Its function is as follows. Catalyzes the rate-limiting step of the oxidative pentose-phosphate pathway, which represents a route for the dissimilation of carbohydrates besides glycolysis. The main function of this enzyme is to provide reducing power (NADPH) and pentose phosphates for fatty acid and nucleic acid synthesis which are involved in membrane synthesis and cell division. This is Glucose-6-phosphate 1-dehydrogenase, chloroplastic from Nicotiana tabacum (Common tobacco).